A 212-amino-acid chain; its full sequence is Transmembrane protein 186 (212 aa).

Over 1–78 (MAAVLRAVAR…YLSRLKVAQT (78 aa)) the chain is Mitochondrial matrix. The helical transmembrane segment at 79 to 99 (ALTVAALPPGLYCYSQGLMPF) threads the bilayer. The Mitochondrial intermembrane portion of the chain corresponds to 100–101 (SS). The chain crosses the membrane as a helical span at residues 102–122 (LCLAGGVAGFALAMLCWMSHF). Residues 123–212 (FRRLVGILYV…QVFGVLDALK (90 aa)) lie on the Mitochondrial matrix side of the membrane.

The protein belongs to the TMEM186 family. As to quaternary structure, part of the mitochondrial complex I assembly/MCIA complex that comprises at least the core subunits TMEM126B, NDUFAF1, ECSIT and ACAD9 and complement subunits such as COA1 and TMEM186. Interacts with MT-ND3.

Its subcellular location is the mitochondrion inner membrane. As part of the MCIA complex, required for efficient assembly of the mitochondrial complex I. The polypeptide is Transmembrane protein 186 (Bos taurus (Bovine)).